The chain runs to 250 residues: Ribonuclease HII (250 aa).

The RNase H type-2 domain maps to 66–250 (QLVAGVDEVG…SFAPVSEYEK (185 aa)). D72, E73, and D164 together coordinate a divalent metal cation.

It belongs to the RNase HII family. It depends on Mn(2+) as a cofactor. The cofactor is Mg(2+).

The protein resides in the cytoplasm. It catalyses the reaction Endonucleolytic cleavage to 5'-phosphomonoester.. Endonuclease that specifically degrades the RNA of RNA-DNA hybrids. This chain is Ribonuclease HII, found in Lactobacillus gasseri (strain ATCC 33323 / DSM 20243 / BCRC 14619 / CIP 102991 / JCM 1131 / KCTC 3163 / NCIMB 11718 / NCTC 13722 / AM63).